Reading from the N-terminus, the 815-residue chain is SNF1 protein kinase subunit beta-1 (815 aa).

Residues 1 to 11 (MGNSPSTQDPS) show a composition bias toward polar residues. 2 disordered regions span residues 1-88 (MGNS…TIDK) and 117-146 (SDDH…TVKR). Glycine 2 carries N-myristoyl glycine lipidation. The segment covering 12-31 (HSTKKEHGHHFHDAFNKDRQ) has biased composition (basic and acidic residues). Residues 32-42 (GSITSQLFNNR) are compositionally biased toward polar residues. Serine 33 carries the post-translational modification Phosphoserine. Basic and acidic residues-rich tracts occupy residues 72 to 88 (PSTD…TIDK) and 117 to 129 (SDDH…EEQV). Phosphoserine occurs at positions 181, 198, 200, 206, 209, and 220. Disordered stretches follow at residues 311–335 (HANN…NDDF) and 362–389 (KHHN…FASL). The span at 313 to 326 (NNNGNIENNTRNKG) shows a compositional bias: low complexity. Position 331 is a phosphoserine (serine 331). Over residues 363 to 376 (HHNKTKKAQNKKIR) the composition is skewed to basic residues. Over residues 377-389 (SVSNSRRSSFASL) the composition is skewed to low complexity. The segment at 473 to 716 (VSTDIASALK…LQQGGNIDAE (244 aa)) is kinase-interacting sequence (KIS); required for interaction with SNF1. Serine 494 and serine 497 each carry phosphoserine. The disordered stretch occupies residues 581 to 616 (EPTLDEELPKRPELKRFPSSSRKSSYYSAKGVERPS). Positions 587–596 (ELPKRPELKR) are enriched in basic and acidic residues. Low complexity predominate over residues 599-608 (SSSRKSSYYS). Serine 643 carries the post-translational modification Phosphoserine. The interval 724–804 (SRYPVPDLPI…FITQVVYAPC (81 aa)) is association with SNF1 kinase complex (ASC) domain; required for interaction with SNF4.

It belongs to the 5'-AMP-activated protein kinase beta subunit family. In terms of assembly, component of the SNF1 kinase complex, a heterotrimeric complex composed of the catalytic alpha subunit SNF1, one of the three related beta subunits SIP1, SIP2 or GAL83, and the regulatory gamma subunit SNF4. The beta subunit serves as a bridge between the catalytic and the regulatory subunit. Interacts (via KIS domain) with SNF1. Interacts (via ASC domain) with SNF4. Phosphorylated by SNF1 in vitro.

The protein localises to the cytoplasm. The protein resides in the vacuole membrane. Beta subunit of the SNF1 kinase complex, which is required for transcriptional, metabolic, and developmental adaptations in response to glucose limitation. Has a structural role, mediating heterotrimer formation, and a regulatory role, defining carbon source-regulated subcellular location and substrate specificity of the SNF1 kinase complex. Promotes the PKA-regulated relocalization of the SNF1 kinase complex to the vacuolar membrane in response to various types of carbon stress. The sequence is that of SNF1 protein kinase subunit beta-1 (SIP1) from Saccharomyces cerevisiae (strain ATCC 204508 / S288c) (Baker's yeast).